A 212-amino-acid polypeptide reads, in one-letter code: Pyridoxine/pyridoxamine 5'-phosphate oxidase (212 aa).

FMN-binding positions include Arg-59–Lys-64, Tyr-74–Ser-75, Lys-81, and Gln-103. Lys-64 lines the substrate pocket. Substrate contacts are provided by Tyr-121 and Arg-125. Residues Gln-138–Ser-139 and Trp-183 each bind FMN. Arg-189–His-191 serves as a coordination point for substrate. Residue Arg-193 participates in FMN binding.

This sequence belongs to the pyridoxamine 5'-phosphate oxidase family. In terms of assembly, homodimer. It depends on FMN as a cofactor.

It carries out the reaction pyridoxamine 5'-phosphate + O2 + H2O = pyridoxal 5'-phosphate + H2O2 + NH4(+). The catalysed reaction is pyridoxine 5'-phosphate + O2 = pyridoxal 5'-phosphate + H2O2. Its pathway is cofactor metabolism; pyridoxal 5'-phosphate salvage; pyridoxal 5'-phosphate from pyridoxamine 5'-phosphate: step 1/1. The protein operates within cofactor metabolism; pyridoxal 5'-phosphate salvage; pyridoxal 5'-phosphate from pyridoxine 5'-phosphate: step 1/1. Its function is as follows. Catalyzes the oxidation of either pyridoxine 5'-phosphate (PNP) or pyridoxamine 5'-phosphate (PMP) into pyridoxal 5'-phosphate (PLP). The protein is Pyridoxine/pyridoxamine 5'-phosphate oxidase of Rhodopseudomonas palustris (strain TIE-1).